The primary structure comprises 977 residues: Receptor-like protein kinase 7 (977 aa).

The N-terminal stretch at 1 to 28 (MAPSLRNFNFFHRFSTFLVFSLFSVVSS) is a signal peptide. Residues 29-608 (DDLQVLLKLK…NPSRSHGDTR (580 aa)) lie on the Extracellular side of the membrane. LRR repeat units follow at residues 71–95 (RGNV…SVCE), 96–119 (IQSL…DLKN), and 121–145 (TSLK…SLNQ). N-linked (GlcNAc...) asparagine glycosylation is found at Asn-73 and Asn-119. Residues Asn-152 and Asn-167 are each glycosylated (N-linked (GlcNAc...) asparagine). 17 LRR repeats span residues 168 to 194 (ATSL…VVSL), 195 to 218 (KKLS…IGDL), 219 to 242 (TELR…ISKL), 244 to 265 (NLWQ…GFGN), 267 to 289 (KNLT…LRSL), 290 to 312 (TNLV…EFGE), 313 to 337 (FKDL…LGSL), 339 to 361 (DFDF…MCKN), 362 to 385 (GKMK…YANC), 386 to 409 (LTLQ…LWGL), 411 to 433 (KLEI…IKNG), 434 to 457 (KMLG…IGDT), 458 to 481 (ESLT…IGKL), 482 to 505 (KGLS…IGSC), 507 to 529 (MLSD…LGSL), 530 to 553 (PTLN…LSSL), and 555 to 578 (LSLL…SYNG). Asn-204 is a glycosylation site (N-linked (GlcNAc...) asparagine). Residues Asn-252 and Asn-268 are each glycosylated (N-linked (GlcNAc...) asparagine). Asn-318 carries N-linked (GlcNAc...) asparagine glycosylation. 2 N-linked (GlcNAc...) asparagine glycosylation sites follow: Asn-373 and Asn-399. N-linked (GlcNAc...) asparagine glycosylation is found at Asn-536 and Asn-577. The chain crosses the membrane as a helical span at residues 609 to 629 (VFVLCIVFGLLILLASLVFFL). At 630–977 (YLKKTEKKEG…ESDVKVKEIS (348 aa)) the chain is on the cytoplasmic side. Positions 666-959 (IKEENLIGRG…QMIEDAEPCR (294 aa)) constitute a Protein kinase domain. ATP contacts are provided by residues 672–680 (IGRGGCGDV) and Lys-694. The Proton acceptor role is filled by Asp-805.

This sequence belongs to the protein kinase superfamily. Ser/Thr protein kinase family. As to quaternary structure, interacts with PIP1. As to expression, expressed in roots, stems and dry seeds. Expressed at junctions between organs, such as the insertion zones of stamens, petals and sepals, the transition zones of floral stem and pedicel, pedicel and silique, and floral stem and cauline leaves.

Its subcellular location is the membrane. It catalyses the reaction L-seryl-[protein] + ATP = O-phospho-L-seryl-[protein] + ADP + H(+). The enzyme catalyses L-threonyl-[protein] + ATP = O-phospho-L-threonyl-[protein] + ADP + H(+). Functionally, plays a role in pattern-triggered immunity (PTI) signaling induced by pathogen-associated molecular patterns (PAMPs). Acts as a receptor for PIP1 defense peptide. PIP1 is an endogenous secreted peptide that acts as elicitor of immune response and positive regulator of defense response. Involved in the control of seed germination speed, in tolerance to oxidative stress and in maintaining seed longevity. This is Receptor-like protein kinase 7 from Arabidopsis thaliana (Mouse-ear cress).